The primary structure comprises 1103 residues: Bifunctional cytochrome P450/NADPH--P450 reductase (1103 aa).

The interval 1–491 is cytochrome P450; the sequence is MSTPKAEPVP…SSSEHADHAA (491 aa). C415 contacts heme. The interval 492–1103 is NADPH--P450 reductase; it reads GHGKAGAAKK…KERYTTDIFA (612 aa). Positions 508–649 constitute a Flavodoxin-like domain; the sequence is MHVYYGSNTG…DFDTWGETSF (142 aa). Residues 514–519, 561–564, C596, and T604 contribute to the FMN site; these read SNTGTC and SYEG. Positions 685-924 constitute an FAD-binding FR-type domain; sequence LQLQEGLVVE…RPSHTGFKPP (240 aa).

It in the N-terminal section; belongs to the cytochrome P450 family. Heme serves as cofactor. It depends on FAD as a cofactor. FMN is required as a cofactor.

The enzyme catalyses 2 oxidized [cytochrome P450] + NADPH = 2 reduced [cytochrome P450] + NADP(+) + H(+). It carries out the reaction an organic molecule + reduced [NADPH--hemoprotein reductase] + O2 = an alcohol + oxidized [NADPH--hemoprotein reductase] + H2O + H(+). Its function is as follows. Functions as a fatty acid monooxygenase. Also displays a NADPH-dependent reductase activity in the C-terminal domain, which allows electron transfer from NADPH to the heme iron of the cytochrome P450 N-terminal domain. In Aspergillus oryzae (strain ATCC 42149 / RIB 40) (Yellow koji mold), this protein is Bifunctional cytochrome P450/NADPH--P450 reductase.